A 674-amino-acid chain; its full sequence is Forkhead box protein P1 (674 aa).

A compositionally biased stretch (polar residues) spans 1 to 19 (MMQESGTETKSNGSAIQNG). The disordered stretch occupies residues 1 to 44 (MMQESGTETKSNGSAIQNGSSGGNHLLECGSLREGRSNGETPAV). The residue at position 82 (serine 82) is a Phosphoserine. The segment covering 269–281 (MNPHASTNGQLSV) has biased composition (polar residues). Positions 269 to 296 (MNPHASTNGQLSVHTPKRESLSHEEHPH) are disordered. Positions 284–296 (PKRESLSHEEHPH) are enriched in basic and acidic residues. Residue lysine 285 forms a Glycyl lysine isopeptide (Lys-Gly) (interchain with G-Cter in SUMO2) linkage. The segment at 304–329 (GVCKWPGCEAVCEDFQSFLKHLNSEH) adopts a C2H2-type zinc-finger fold. The leucine-zipper stretch occupies residues 346-367 (VQQLELQLAKDKERLQAMMTHL). Residues lysine 370 and lysine 375 each participate in a glycyl lysine isopeptide (Lys-Gly) (interchain with G-Cter in SUMO2) cross-link. Residues 380 to 384 (PLNLV) are CTBP1-binding. Over residues 388–401 (TLSKSASEASPQSL) the composition is skewed to polar residues. Positions 388–427 (TLSKSASEASPQSLPHTPTTPTAPITPATQGPSVITTTSM) are disordered. The segment covering 402-419 (PHTPTTPTAPITPATQGP) has biased composition (low complexity). Lysine 440 participates in a covalent cross-link: Glycyl lysine isopeptide (Lys-Gly) (interchain with G-Cter in SUMO2). The fork-head DNA-binding region spans 462-552 (RPPFTYASLI…PQKISGNPSL (91 aa)). The segment at 608–674 (EHTNSNESDS…EDEPVNEDME (67 aa)) is disordered. Over residues 609–620 (HTNSNESDSSPG) the composition is skewed to polar residues. Threonine 650 is subject to Phosphothreonine. Serine 655 carries the phosphoserine modification. The segment covering 664 to 674 (YEDEPVNEDME) has biased composition (acidic residues).

Forms homodimers and heterodimers with FOXP2 and FOXP4. Dimerization is required for DNA-binding. Self-associates. Interacts with CTBP1. Interacts with NCOR2 and AR. Interacts with FOXP2. Interacts with TBR1. Interacts with AURKA; this interaction facilitates the phosphorylation of FOXP1, which suppresses the expression of FBXL7. Interacts with ZMYM2.

Its subcellular location is the nucleus. In terms of biological role, transcriptional repressor. Can act with CTBP1 to synergistically repress transcription but CTPBP1 is not essential. Plays an important role in the specification and differentiation of lung epithelium. Acts cooperatively with FOXP4 to regulate lung secretory epithelial cell fate and regeneration by restricting the goblet cell lineage program; the function may involve regulation of AGR2. Essential transcriptional regulator of B-cell development. Involved in regulation of cardiac muscle cell proliferation. Involved in the columnar organization of spinal motor neurons. Promotes the formation of the lateral motor neuron column (LMC) and the preganglionic motor column (PGC) and is required for respective appropriate motor axon projections. The segment-appropriate generation of spinal cord motor columns requires cooperation with other Hox proteins. Can regulate PITX3 promoter activity; may promote midbrain identity in embryonic stem cell-derived dopamine neurons by regulating PITX3. Negatively regulates the differentiation of T follicular helper cells T(FH)s. Involved in maintenance of hair follicle stem cell quiescence; the function probably involves regulation of FGF18. Represses transcription of various pro-apoptotic genes and cooperates with NF-kappa B-signaling in promoting B-cell expansion by inhibition of caspase-dependent apoptosis. Binds to CSF1R promoter elements and is involved in regulation of monocyte differentiation and macrophage functions; repression of CSF1R in monocytes seems to involve NCOR2 as corepressor. Involved in endothelial cell proliferation, tube formation and migration indicative for a role in angiogenesis; the role in neovascularization seems to implicate suppression of SEMA5B. Can negatively regulate androgen receptor signaling. Acts as a transcriptional activator of the FBXL7 promoter; this activity is regulated by AURKA. The chain is Forkhead box protein P1 (FOXP1) from Bos taurus (Bovine).